A 182-amino-acid polypeptide reads, in one-letter code: Hexose transport activator protein (182 aa).

The disordered stretch occupies residues 46–65 (GIWGPMEKKPGGVGKKKGSE).

In terms of biological role, multicopy expression suppresses glucose-uptake defects in various yeast mutants. The chain is Hexose transport activator protein (AHT1) from Saccharomyces cerevisiae (strain ATCC 204508 / S288c) (Baker's yeast).